The primary structure comprises 452 residues: Probable 1,4-beta-D-glucan cellobiohydrolase A (452 aa).

A signal peptide spans 1 to 17; that stretch reads MHQRALLFSALLTAVRA. A glycan (N-linked (GlcNAc...) asparagine) is linked at Asn62. Residue Glu227 is the Nucleophile of the active site. Glu232 (proton donor) is an active-site residue. N-linked (GlcNAc...) asparagine glycosylation is found at Asn285, Asn335, Asn402, and Asn445.

It belongs to the glycosyl hydrolase 7 (cellulase C) family.

Its subcellular location is the secreted. The enzyme catalyses Hydrolysis of (1-&gt;4)-beta-D-glucosidic linkages in cellulose and cellotetraose, releasing cellobiose from the non-reducing ends of the chains.. Functionally, the biological conversion of cellulose to glucose generally requires three types of hydrolytic enzymes: (1) Endoglucanases which cut internal beta-1,4-glucosidic bonds; (2) Exocellobiohydrolases that cut the disaccharide cellobiose from the non-reducing end of the cellulose polymer chain; (3) Beta-1,4-glucosidases which hydrolyze the cellobiose and other short cello-oligosaccharides to glucose. In Aspergillus niger (strain ATCC MYA-4892 / CBS 513.88 / FGSC A1513), this protein is Probable 1,4-beta-D-glucan cellobiohydrolase A (cbhA).